The chain runs to 123 residues: Ribosome-binding factor A (123 aa).

It belongs to the RbfA family. As to quaternary structure, monomer. Binds 30S ribosomal subunits, but not 50S ribosomal subunits or 70S ribosomes.

The protein localises to the cytoplasm. Its function is as follows. One of several proteins that assist in the late maturation steps of the functional core of the 30S ribosomal subunit. Associates with free 30S ribosomal subunits (but not with 30S subunits that are part of 70S ribosomes or polysomes). Required for efficient processing of 16S rRNA. May interact with the 5'-terminal helix region of 16S rRNA. This is Ribosome-binding factor A from Neisseria meningitidis serogroup C (strain 053442).